Here is a 190-residue protein sequence, read N- to C-terminus: UPF0316 protein Mboo_0605 (190 aa).

3 helical membrane passes run 3–23, 41–61, and 67–87; these read IGTF…RIAE, LAAY…GLVL, and FWNL…GMEI.

It belongs to the UPF0316 family.

Its subcellular location is the cell membrane. The sequence is that of UPF0316 protein Mboo_0605 from Methanoregula boonei (strain DSM 21154 / JCM 14090 / 6A8).